Here is a 279-residue protein sequence, read N- to C-terminus: Bifunctional protein FolD (279 aa).

NADP(+) is bound by residues 162–164 (GRS), Ser187, and Ile228.

It belongs to the tetrahydrofolate dehydrogenase/cyclohydrolase family. As to quaternary structure, homodimer.

The enzyme catalyses (6R)-5,10-methylene-5,6,7,8-tetrahydrofolate + NADP(+) = (6R)-5,10-methenyltetrahydrofolate + NADPH. It carries out the reaction (6R)-5,10-methenyltetrahydrofolate + H2O = (6R)-10-formyltetrahydrofolate + H(+). Its pathway is one-carbon metabolism; tetrahydrofolate interconversion. Catalyzes the oxidation of 5,10-methylenetetrahydrofolate to 5,10-methenyltetrahydrofolate and then the hydrolysis of 5,10-methenyltetrahydrofolate to 10-formyltetrahydrofolate. This chain is Bifunctional protein FolD, found in Acidiphilium cryptum (strain JF-5).